We begin with the raw amino-acid sequence, 136 residues long: Ribosome-binding factor A (136 aa).

It belongs to the RbfA family. As to quaternary structure, monomer. Binds 30S ribosomal subunits, but not 50S ribosomal subunits or 70S ribosomes.

It localises to the cytoplasm. Its function is as follows. One of several proteins that assist in the late maturation steps of the functional core of the 30S ribosomal subunit. Associates with free 30S ribosomal subunits (but not with 30S subunits that are part of 70S ribosomes or polysomes). Required for efficient processing of 16S rRNA. May interact with the 5'-terminal helix region of 16S rRNA. This is Ribosome-binding factor A from Rhodopseudomonas palustris (strain BisB5).